A 42-amino-acid polypeptide reads, in one-letter code: Envelope protein P10 (42 aa).

The chain crosses the membrane as a helical span at residues 20-40 (TTAAKIAVVYALVGLVGGLLL).

Its subcellular location is the virion membrane. Involved in cell lysis. This chain is Envelope protein P10 (P10), found in Pseudomonas savastanoi pv. phaseolicola (Pseudomonas syringae pv. phaseolicola).